Reading from the N-terminus, the 7756-residue chain is Linear gramicidin synthase subunit C (7756 aa).

Carrier domains follow at residues 977 to 1052 (EPRN…AALQ), 2042 to 2116 (APAT…ADSS), 3557 to 3632 (APRT…ASLL), 4621 to 4695 (APAT…TVTD), 6141 to 6216 (APRK…AGLL), and 7200 to 7274 (APET…GDSV). Residues serine 1012, serine 2077, serine 3592, serine 4656, serine 6176, and serine 7235 each carry the O-(pantetheine 4'-phosphoryl)serine modification.

The protein belongs to the ATP-dependent AMP-binding enzyme family. Large multienzyme complex composed of 4 subunits; LgrA, LgrB, LgrC and LgrD. Pantetheine 4'-phosphate serves as cofactor.

In terms of biological role, activates the 7th to 12th amino acids (Val, D-Val, Trp, D-Leu, Xaa and D-Leu) in linear gramicidin and catalyzes the formation of the peptide bond between them. This enzyme is also responsible for the epimerization of the 8th (D-Val), the 10th (D-Leu) and 12th (D-Leu) amino acids. The 11th (Xaa) amino acid is Trp in linear gramicidin A; Phe in linear gramicidin B and Tyr in linear gramicidin C. This Brevibacillus parabrevis protein is Linear gramicidin synthase subunit C (lgrC).